Reading from the N-terminus, the 451-residue chain is 2,4-dinitrotoluene dioxygenase system, large oxygenase component (451 aa).

Positions 42-126 constitute a Rieske domain; the sequence is WLFLTHDSLI…LQSVPFEKEL (85 aa). [2Fe-2S] cluster contacts are provided by Cys84, His86, Cys104, and His107. Fe cation is bound by residues His211, His216, and Asp365.

The protein belongs to the bacterial ring-hydroxylating dioxygenase alpha subunit family. As to quaternary structure, the 2,4-dinitrotoluene dioxygenase (DNTDO) multicomponent enzyme system is composed of an electron transfer component and a dioxygenase component (iron sulfur protein (ISP)). The electron transfer component is composed of a ferredoxin reductase (DntAa) and a ferredoxin (DntAb), and the dioxygenase component is formed of a large alpha subunit (DntAc) and a small beta subunit (DntAd). [2Fe-2S] cluster is required as a cofactor. Fe(2+) serves as cofactor.

The catalysed reaction is 2,4-dinitrotoluene + NADH + O2 = 4-methyl-5-nitrocatechol + nitrite + NAD(+). Functionally, component of the 2,4-dinitrotoluene dioxygenase (DNTDO) multicomponent enzyme system which catalyzes the incorporation of both atoms of molecular oxygen into 2,4-dinitrotoluene (DNT) to form 4-methyl-5-nitrocatechol (MNC) and nitrite. The alpha subunit has a catalytic role in the holoenzyme. Also able to convert naphthalene to cis-(1R,2S)-dihydroxy-1,2-dihydronaphthalene. This chain is 2,4-dinitrotoluene dioxygenase system, large oxygenase component, found in Burkholderia sp. (strain RASC).